Here is a 97-residue protein sequence, read N- to C-terminus: Aspartyl/glutamyl-tRNA(Asn/Gln) amidotransferase subunit C (97 aa).

The protein belongs to the GatC family. Heterotrimer of A, B and C subunits.

It catalyses the reaction L-glutamyl-tRNA(Gln) + L-glutamine + ATP + H2O = L-glutaminyl-tRNA(Gln) + L-glutamate + ADP + phosphate + H(+). The catalysed reaction is L-aspartyl-tRNA(Asn) + L-glutamine + ATP + H2O = L-asparaginyl-tRNA(Asn) + L-glutamate + ADP + phosphate + 2 H(+). Allows the formation of correctly charged Asn-tRNA(Asn) or Gln-tRNA(Gln) through the transamidation of misacylated Asp-tRNA(Asn) or Glu-tRNA(Gln) in organisms which lack either or both of asparaginyl-tRNA or glutaminyl-tRNA synthetases. The reaction takes place in the presence of glutamine and ATP through an activated phospho-Asp-tRNA(Asn) or phospho-Glu-tRNA(Gln). The sequence is that of Aspartyl/glutamyl-tRNA(Asn/Gln) amidotransferase subunit C from Synechococcus sp. (strain CC9902).